The following is a 1978-amino-acid chain: Protein MOR1 (1978 aa).

HEAT repeat units lie at residues 48–86 (DPRLRDFGHLFRKTVADSNAPVQEKALDALIAFLRAADS) and 165–202 (IPPKRILKMLPELFDHQDQNVRASAKGVTLELCRWIGK). Residues 230–264 (AGAKPTRKIRSEQDKEPEAEASSDVVGDGPSEEAV) form a disordered region. Basic and acidic residues predominate over residues 238–247 (IRSEQDKEPE). 3 HEAT repeats span residues 322-359 (GDFSEICRTLKKLITDVNLAVAVEAIQAIGNLACGLRT), 363-400 (ASSRFMLPVLLEKLKEKKQSVTDPLTQTLQTMYKAGCL), and 442-479 (KAHKEYVPLCMECLNDGTPDVRDAAFSALAAIAKSVGM). The interval 501 to 587 (IAGSGGGDQA…SVEPPEDVEP (87 aa)) is disordered. Residues 510 to 527 (AGTSSVTVQSSVGSTATG) are compositionally biased toward low complexity. Basic and acidic residues predominate over residues 565 to 577 (GKKDGSVRNEGSK). 4 HEAT repeats span residues 849 to 886 (DISTKITPNLLKGFESPDWKMRLESIEAVNKILEEANK), 890 to 928 (PTGTGELFGGLRGRLLDSNKNLVMQTLTTIGGVAAAMGP), 932 to 969 (KASKGILSDVLKCLGDNKKHMRECTLAALDLWLGAVHL), and 1008 to 1045 (VDAIHLLKPASTAMTDKSADVRKAAEGCISEILRVSGQ). Residues 1087 to 1115 (SKGVTKISKSTSNGTLKQGNRSRAVPTKG) form a disordered region. Residues 1093–1107 (ISKSTSNGTLKQGNR) show a composition bias toward polar residues. HEAT repeat units lie at residues 1230–1253 (LKVLEFLPELFNTLRDEEYCMTEA), 1254–1286 (EAAIFLPCLAEKLGHNIEKVREKMRELMKQIIQ), 1287–1325 (AYSVGKTYPYILEGLRSKNNRTRIECTDLIGYLLETCGT), and 1328–1365 (GGLLKYLNIVASLTAERDGELRKAALNTMATGYQILGA). Positions 1393-1403 (MEKRREGKPGE) are enriched in basic and acidic residues. The interval 1393–1431 (MEKRREGKPGEARAALRRSVRDSGPEVAEQSGDISQTVP) is disordered. The HEAT 14 repeat unit spans residues 1535–1575 (RSCKYVLNTLMQTFQNKKLAHAVKEGTLESLITELLLWLLD). The segment at 1837-1862 (AAAGRTPSSLPLSTPPPSSLALPSPD) is disordered.

It belongs to the TOG/XMAP215 family. In terms of tissue distribution, expressed in roots, cotyledons, rosette leaves, stems, open flowers and green siliques.

It is found in the cytoplasm. The protein resides in the cytoskeleton. Its subcellular location is the phragmoplast. The protein localises to the spindle. In terms of biological role, microtubule-binding protein that is essential for cortical microtubules organization and function. Essential for maintaining the interphase cortical array and for correct morphogenesis. Promotes rapid growth and shrinkage of microtubules and suppresses the pausing of interphase microtubules. Regulates the structure and function of microtubule arrays during mitosis and cytokinesis. Probably not required for cellulose microfibrils alignment in roots. This is Protein MOR1 (MOR1) from Arabidopsis thaliana (Mouse-ear cress).